The chain runs to 637 residues: Chaperone protein HtpG (637 aa).

The tract at residues 1–334 (MQDVVNSEKL…SSDLPLNISR (334 aa)) is a; substrate-binding. Residues 335 to 558 (ETLQNNKVIE…DGSMDIRMER (224 aa)) form a b region. Residues 559–637 (FLREQKQLNY…MNNVLVKVYQ (79 aa)) are c.

The protein belongs to the heat shock protein 90 family. Homodimer.

It is found in the cytoplasm. Molecular chaperone. Has ATPase activity. The polypeptide is Chaperone protein HtpG (Ehrlichia canis (strain Jake)).